The sequence spans 94 residues: Small ribosomal subunit protein uS19 (94 aa).

Belongs to the universal ribosomal protein uS19 family.

Functionally, protein S19 forms a complex with S13 that binds strongly to the 16S ribosomal RNA. This chain is Small ribosomal subunit protein uS19, found in Nitrosomonas eutropha (strain DSM 101675 / C91 / Nm57).